Here is a 266-residue protein sequence, read N- to C-terminus: Type II pantothenate kinase (266 aa).

Residue 6–13 (DAGGTLIK) participates in ATP binding. Residue glutamate 70 is the Proton acceptor of the active site. Residues threonine 99, 121-125 (GGMIQ), tyrosine 137, and serine 225 each bind ATP.

It belongs to the type II pantothenate kinase family. Homodimer.

Its subcellular location is the cytoplasm. The enzyme catalyses (R)-pantothenate + ATP = (R)-4'-phosphopantothenate + ADP + H(+). Its pathway is cofactor biosynthesis; coenzyme A biosynthesis; CoA from (R)-pantothenate: step 1/5. Catalyzes the phosphorylation of pantothenate (Pan), the first step in CoA biosynthesis. The protein is Type II pantothenate kinase of Staphylococcus haemolyticus (strain JCSC1435).